The sequence spans 480 residues: uncharacterized protein (480 aa).

The segment at 1–20 (MDVKDTGINRSDTPISDQDH) is disordered.

This is an uncharacterized protein from Arabidopsis thaliana (Mouse-ear cress).